We begin with the raw amino-acid sequence, 160 residues long: Ureidoglycolate lyase (160 aa).

It belongs to the ureidoglycolate lyase family. In terms of assembly, homodimer. Ni(2+) serves as cofactor.

The enzyme catalyses (S)-ureidoglycolate = urea + glyoxylate. The protein operates within nitrogen metabolism; (S)-allantoin degradation. In terms of biological role, catalyzes the catabolism of the allantoin degradation intermediate (S)-ureidoglycolate, generating urea and glyoxylate. Involved in the anaerobic utilization of allantoin as sole nitrogen source. Reinforces the induction of genes involved in the degradation of allantoin and glyoxylate by producing glyoxylate. This is Ureidoglycolate lyase from Escherichia coli (strain K12 / MC4100 / BW2952).